A 125-amino-acid chain; its full sequence is Holo-[acyl-carrier-protein] synthase (125 aa).

The Mg(2+) site is built by D8 and E57.

It belongs to the P-Pant transferase superfamily. AcpS family. The cofactor is Mg(2+).

The protein localises to the cytoplasm. It catalyses the reaction apo-[ACP] + CoA = holo-[ACP] + adenosine 3',5'-bisphosphate + H(+). Its function is as follows. Transfers the 4'-phosphopantetheine moiety from coenzyme A to a Ser of acyl-carrier-protein. In Nitrosomonas europaea (strain ATCC 19718 / CIP 103999 / KCTC 2705 / NBRC 14298), this protein is Holo-[acyl-carrier-protein] synthase.